We begin with the raw amino-acid sequence, 388 residues long: Pepsin A-3 (388 aa).

The signal sequence occupies residues 1 to 15; the sequence is MKWLLLLGLVALSEC. Residues 16–62 constitute a propeptide, activation peptide; it reads IMYKVPLIRKKSLRRTLSERGLLKDFLKKHNLNPARKYFPQWKAPTL. A Peptidase A1 domain is found at 76–385; that stretch reads YFGTIGIGTP…DRANNQVGLA (310 aa). The active site involves aspartate 94. 2 disulfide bridges follow: cysteine 107/cysteine 112 and cysteine 268/cysteine 272. The active site involves aspartate 277. Cysteine 311 and cysteine 344 form a disulfide bridge.

It belongs to the peptidase A1 family.

It is found in the secreted. It carries out the reaction Preferential cleavage: hydrophobic, preferably aromatic, residues in P1 and P1' positions. Cleaves 1-Phe-|-Val-2, 4-Gln-|-His-5, 13-Glu-|-Ala-14, 14-Ala-|-Leu-15, 15-Leu-|-Tyr-16, 16-Tyr-|-Leu-17, 23-Gly-|-Phe-24, 24-Phe-|-Phe-25 and 25-Phe-|-Tyr-26 bonds in the B chain of insulin.. Shows particularly broad specificity; although bonds involving phenylalanine and leucine are preferred, many others are also cleaved to some extent. The chain is Pepsin A-3 (PGA3) from Homo sapiens (Human).